Reading from the N-terminus, the 353-residue chain is Probable transport protein YPL264C (353 aa).

The Cytoplasmic segment spans residues 1-16 (MTLQRISKDYLKPNYG). A helical membrane pass occupies residues 17–37 (LILLIVSYFFNSSMVVSTKVL). Positions 24–160 (YFFNSSMVVS…SFSGVVLIIR (137 aa)) constitute an EamA 1 domain. Topologically, residues 38–51 (ENDPLETSQSRINP) are extracellular. A helical membrane pass occupies residues 52–69 (LQILLVRMSITYCCTLVY). Over 70 to 94 (MHWNKQSVPDIPWGPAPCRKWLILR) the chain is Cytoplasmic. Residues 95–115 (GIMGFFGVFGMYFSLMYLSIS) traverse the membrane as a helical segment. Position 116 (D116) is a topological domain, extracellular. Residues 117-137 (AVLITFMSPTLTIFLSFLLLG) traverse the membrane as a helical segment. Over 138-144 (EPFSKLE) the chain is Cytoplasmic. A helical membrane pass occupies residues 145–165 (ALGSLISFSGVVLIIRPTFLF). The Extracellular segment spans residues 166–188 (GEQTQGQQSPQDDIVETQNPKLR). A helical membrane pass occupies residues 189-209 (LIAIGVSLLGVCGLSSVYIII). Residues 200-326 (CGLSSVYIII…IVSSTIWVIN (127 aa)) form the EamA 2 domain. Residues 210 to 218 (RYIGNKAHA) are Cytoplasmic-facing. Residues 219-239 (IMSVSYFSLVTTVVAALGVLL) form a helical membrane-spanning segment. Residues 240–254 (IPSMSLQLPHSWKQW) lie on the Extracellular side of the membrane. The helical transmembrane segment at 255-275 (GLFLNLGISGFIHQILLTMGI) threads the bilayer. At 276-282 (QRERAGR) the chain is on the cytoplasmic side. Residues 283–303 (GSLMTYTQVIYAVFWDVVLFH) form a helical membrane-spanning segment. Position 304 (H304) is a topological domain, extracellular. Residues 305-325 (WPNIWTWCGMAVIVSSTIWVI) traverse the membrane as a helical segment. Over 326-353 (NMRASKQNVVATAELLSTSDFELDDLED) the chain is Cytoplasmic.

It is found in the membrane. This is Probable transport protein YPL264C from Saccharomyces cerevisiae (strain ATCC 204508 / S288c) (Baker's yeast).